Here is a 155-residue protein sequence, read N- to C-terminus: SsrA-binding protein (155 aa).

This sequence belongs to the SmpB family.

It is found in the cytoplasm. Required for rescue of stalled ribosomes mediated by trans-translation. Binds to transfer-messenger RNA (tmRNA), required for stable association of tmRNA with ribosomes. tmRNA and SmpB together mimic tRNA shape, replacing the anticodon stem-loop with SmpB. tmRNA is encoded by the ssrA gene; the 2 termini fold to resemble tRNA(Ala) and it encodes a 'tag peptide', a short internal open reading frame. During trans-translation Ala-aminoacylated tmRNA acts like a tRNA, entering the A-site of stalled ribosomes, displacing the stalled mRNA. The ribosome then switches to translate the ORF on the tmRNA; the nascent peptide is terminated with the 'tag peptide' encoded by the tmRNA and targeted for degradation. The ribosome is freed to recommence translation, which seems to be the essential function of trans-translation. In Streptococcus pneumoniae (strain P1031), this protein is SsrA-binding protein.